Here is a 213-residue protein sequence, read N- to C-terminus: Thiopurine S-methyltransferase (213 aa).

Trp-10, Met-45, Glu-66, and Arg-120 together coordinate S-adenosyl-L-methionine.

This sequence belongs to the class I-like SAM-binding methyltransferase superfamily. TPMT family.

It is found in the cytoplasm. The enzyme catalyses S-adenosyl-L-methionine + a thiopurine = S-adenosyl-L-homocysteine + a thiopurine S-methylether.. The polypeptide is Thiopurine S-methyltransferase (Photobacterium profundum (strain SS9)).